Consider the following 241-residue polypeptide: Small ribosomal subunit protein eS4 (241 aa).

Residues 37–99 (IPLGLLLRDY…ADLYLRIVPD (63 aa)) form the S4 RNA-binding domain.

It belongs to the eukaryotic ribosomal protein eS4 family.

The protein is Small ribosomal subunit protein eS4 of Metallosphaera sedula (strain ATCC 51363 / DSM 5348 / JCM 9185 / NBRC 15509 / TH2).